The sequence spans 781 residues: Molybdenum cofactor sulfurase (781 aa).

An N6-(pyridoxal phosphate)lysine modification is found at Lys246. Cys413 is a catalytic residue. In terms of domain architecture, MOSC spans 619 to 781; that stretch reads GDAVAQWLSE…MTCGDVVIVE (163 aa). Phosphoserine is present on Ser734.

This sequence belongs to the class-V pyridoxal-phosphate-dependent aminotransferase family. MOCOS subfamily. It depends on pyridoxal 5'-phosphate as a cofactor.

It carries out the reaction Mo-molybdopterin + L-cysteine + AH2 = thio-Mo-molybdopterin + L-alanine + A + H2O. The protein operates within cofactor biosynthesis; molybdopterin biosynthesis. Sulfurates the molybdenum cofactor. Sulfation of molybdenum is essential for xanthine dehydrogenase (XDH) and aldehyde oxidase (ADO) enzymes in which molybdenum cofactor is liganded by 1 oxygen and 1 sulfur atom in active form. The polypeptide is Molybdenum cofactor sulfurase (Drosophila erecta (Fruit fly)).